Reading from the N-terminus, the 137-residue chain is Proofreading thioesterase EntH (137 aa).

Glu-63 functions as the Nucleophile or proton acceptor in the catalytic mechanism.

It belongs to the thioesterase PaaI family. In terms of assembly, homotetramer. Dimer of dimers. Interacts specifically with the aryl carrier protein (ArCP) domain of EntB.

It localises to the cytoplasm. It participates in siderophore biosynthesis; enterobactin biosynthesis. Its function is as follows. Required for optimal enterobactin synthesis. Acts as a proofreading enzyme that prevents EntB misacylation by hydrolyzing the thioester bound existing between EntB and wrongly charged molecules. This chain is Proofreading thioesterase EntH, found in Citrobacter koseri (strain ATCC BAA-895 / CDC 4225-83 / SGSC4696).